A 162-amino-acid chain; its full sequence is HTH-type transcriptional regulator IscR (162 aa).

The region spanning 2-131 (RLTSKGRYAV…NNITLGELVN (130 aa)) is the HTH rrf2-type domain. The H-T-H motif DNA-binding region spans 28–51 (LADISERQGISLSYLEQLFSRLRK). Residues C92, C98, and C104 each coordinate [2Fe-2S] cluster. The tract at residues 140–162 (GRQHTHDAPRTRTQDAIDVKLRA) is disordered. Basic and acidic residues predominate over residues 143 to 162 (HTHDAPRTRTQDAIDVKLRA).

[2Fe-2S] cluster serves as cofactor.

Its function is as follows. Regulates the transcription of several operons and genes involved in the biogenesis of Fe-S clusters and Fe-S-containing proteins. The sequence is that of HTH-type transcriptional regulator IscR from Shigella flexneri.